The following is a 385-amino-acid chain: Succinate--CoA ligase [ADP-forming] subunit beta (385 aa).

Positions 9–241 (KELLRDFGIN…IDEEEPSELE (233 aa)) constitute an ATP-grasp domain. ATP-binding positions include Lys46, 53 to 55 (GRG), Glu99, Thr102, and Glu107. Residues Asn196 and Asp210 each coordinate Mg(2+). Substrate is bound by residues Asn261 and 318-320 (GIV).

Belongs to the succinate/malate CoA ligase beta subunit family. As to quaternary structure, heterotetramer of two alpha and two beta subunits. Mg(2+) serves as cofactor.

The enzyme catalyses succinate + ATP + CoA = succinyl-CoA + ADP + phosphate. It catalyses the reaction GTP + succinate + CoA = succinyl-CoA + GDP + phosphate. Its pathway is carbohydrate metabolism; tricarboxylic acid cycle; succinate from succinyl-CoA (ligase route): step 1/1. In terms of biological role, succinyl-CoA synthetase functions in the citric acid cycle (TCA), coupling the hydrolysis of succinyl-CoA to the synthesis of either ATP or GTP and thus represents the only step of substrate-level phosphorylation in the TCA. The beta subunit provides nucleotide specificity of the enzyme and binds the substrate succinate, while the binding sites for coenzyme A and phosphate are found in the alpha subunit. This Campylobacter fetus subsp. fetus (strain 82-40) protein is Succinate--CoA ligase [ADP-forming] subunit beta.